Reading from the N-terminus, the 209-residue chain is GTP cyclohydrolase 1 (209 aa).

Zn(2+) contacts are provided by C89, H92, and C163.

It belongs to the GTP cyclohydrolase I family. Toroid-shaped homodecamer, composed of two pentamers of five dimers.

It carries out the reaction GTP + H2O = 7,8-dihydroneopterin 3'-triphosphate + formate + H(+). Its pathway is cofactor biosynthesis; 7,8-dihydroneopterin triphosphate biosynthesis; 7,8-dihydroneopterin triphosphate from GTP: step 1/1. This is GTP cyclohydrolase 1 from Sulfolobus acidocaldarius (strain ATCC 33909 / DSM 639 / JCM 8929 / NBRC 15157 / NCIMB 11770).